Here is a 214-residue protein sequence, read N- to C-terminus: 3-demethoxyubiquinol 3-hydroxylase (214 aa).

Fe cation-binding residues include Glu-63, Glu-93, His-96, Glu-145, Glu-177, and His-180.

This sequence belongs to the COQ7 family. The cofactor is Fe cation.

The protein localises to the cell membrane. The catalysed reaction is a 5-methoxy-2-methyl-3-(all-trans-polyprenyl)benzene-1,4-diol + AH2 + O2 = a 3-demethylubiquinol + A + H2O. It functions in the pathway cofactor biosynthesis; ubiquinone biosynthesis. Functionally, catalyzes the hydroxylation of 2-nonaprenyl-3-methyl-6-methoxy-1,4-benzoquinol during ubiquinone biosynthesis. In Nitrosococcus oceani (strain ATCC 19707 / BCRC 17464 / JCM 30415 / NCIMB 11848 / C-107), this protein is 3-demethoxyubiquinol 3-hydroxylase.